The sequence spans 222 residues: Probable nicotinate-nucleotide adenylyltransferase (222 aa).

The protein belongs to the NadD family.

The enzyme catalyses nicotinate beta-D-ribonucleotide + ATP + H(+) = deamido-NAD(+) + diphosphate. It participates in cofactor biosynthesis; NAD(+) biosynthesis; deamido-NAD(+) from nicotinate D-ribonucleotide: step 1/1. In terms of biological role, catalyzes the reversible adenylation of nicotinate mononucleotide (NaMN) to nicotinic acid adenine dinucleotide (NaAD). The sequence is that of Probable nicotinate-nucleotide adenylyltransferase from Stenotrophomonas maltophilia (strain K279a).